The sequence spans 137 residues: Ribosomal RNA large subunit methyltransferase H (137 aa).

Residues Leu56, Gly85, and 104 to 109 (LSPLTF) contribute to the S-adenosyl-L-methionine site.

Belongs to the RNA methyltransferase RlmH family. As to quaternary structure, homodimer.

Its subcellular location is the cytoplasm. It carries out the reaction pseudouridine(1915) in 23S rRNA + S-adenosyl-L-methionine = N(3)-methylpseudouridine(1915) in 23S rRNA + S-adenosyl-L-homocysteine + H(+). In terms of biological role, specifically methylates the pseudouridine at position 1915 (m3Psi1915) in 23S rRNA. In Prochlorococcus marinus (strain MIT 9515), this protein is Ribosomal RNA large subunit methyltransferase H.